The chain runs to 516 residues: Homeobox protein 6 (516 aa).

Low complexity predominate over residues Asn-22–Ser-31. Disordered stretches follow at residues Asn-22–Asn-140, Ser-200–Ser-256, and Asp-268–Asp-348. Residues Ile-32–Ser-41 show a composition bias toward gly residues. 3 stretches are compositionally biased toward low complexity: residues Ser-42 to Gly-59, Ser-66 to Ser-78, and Thr-101 to Ser-132. Over residues Asn-284–Asn-346 the composition is skewed to low complexity. 2 DNA-binding regions (homeobox) span residues Lys-362–Gly-421 and Ser-424–Ser-483. The segment at Ser-483 to Phe-516 is disordered. Residues Asn-495–Glu-504 show a composition bias toward low complexity. The segment covering Asn-505–Phe-516 has biased composition (acidic residues).

It localises to the nucleus. Its function is as follows. Putative transcription factor. The chain is Homeobox protein 6 (hbx6) from Dictyostelium discoideum (Social amoeba).